The primary structure comprises 344 residues: Large ribosomal subunit protein uL3 (344 aa).

It belongs to the universal ribosomal protein uL3 family. Part of the 50S ribosomal subunit. Forms a cluster with proteins L14 and L24e.

One of the primary rRNA binding proteins, it binds directly near the 3'-end of the 23S rRNA, where it nucleates assembly of the 50S subunit. The sequence is that of Large ribosomal subunit protein uL3 from Aeropyrum pernix (strain ATCC 700893 / DSM 11879 / JCM 9820 / NBRC 100138 / K1).